A 161-amino-acid polypeptide reads, in one-letter code: Endoribonuclease YbeY (161 aa).

Zn(2+) contacts are provided by His121, His125, and His131.

It belongs to the endoribonuclease YbeY family. The cofactor is Zn(2+).

It is found in the cytoplasm. Its function is as follows. Single strand-specific metallo-endoribonuclease involved in late-stage 70S ribosome quality control and in maturation of the 3' terminus of the 16S rRNA. The sequence is that of Endoribonuclease YbeY from Stenotrophomonas maltophilia (strain R551-3).